We begin with the raw amino-acid sequence, 159 residues long: Ubiquitin-conjugating enzyme E2 variant 1B (159 aa).

Residues 11 to 159 (PRNFRLLEEL…KGLVVKCCVM (149 aa)) form the UBC core domain.

Belongs to the ubiquitin-conjugating enzyme family. In terms of assembly, heterodimer with UBC35 or UBC36. Expressed in roots, shoots, leaves, stems and flowers, but not in pollen.

In terms of biological role, has no ubiquitin ligase activity on its own. The heterodimer with UBC catalyzes the synthesis of non-canonical poly-ubiquitin chains that are linked through 'Lys-63'. This type of poly-ubiquitination does not lead to protein degradation by the proteasome. Mediates transcriptional activation of target genes. May play a role in the control of progress through the cell cycle and differentiation. May play a role in the error-free DNA repair pathway and contributes to the survival of cells after DNA damage. This chain is Ubiquitin-conjugating enzyme E2 variant 1B (UEV1B), found in Arabidopsis thaliana (Mouse-ear cress).